The primary structure comprises 353 residues: D-glycerol 3-phosphate phosphatase (353 aa).

The active-site Nucleophile is the aspartate 14. Residues aspartate 14, aspartate 16, and aspartate 209 each contribute to the Mg(2+) site. The active-site Proton donor is the aspartate 16.

Belongs to the HAD-like hydrolase superfamily. Homodimer. Mg(2+) serves as cofactor. Co(2+) is required as a cofactor. The cofactor is Mn(2+).

It carries out the reaction sn-glycerol 1-phosphate + H2O = glycerol + phosphate. It functions in the pathway glycerolipid metabolism. Dephosphorylates D-glycerol 3-phosphate (sn-glycerol 1-phosphate). Is the final enzyme involved in the recycling/catabolism of glycerophospholipid polar heads. To a lesser extent, is also able to act on glycerol 2-phosphate and D-ribulose 5-phosphate, but cannot use D-glyceraldehyde 3-phosphate, dihydroxyacetone-phosphate, UMP or GMP as substrates. The polypeptide is D-glycerol 3-phosphate phosphatase (Mycobacterium tuberculosis (strain ATCC 25618 / H37Rv)).